The sequence spans 62 residues: Keratin-associated protein 19-5 (62 aa).

The tract at residues 5–56 (GSYYGGLGSGIRGFGNLGYGYGCGCGFGGYGYGSGYGRYGYGYPRPLYYGGY) is 14 X 2 AA repeats of G-[YCGS].

Belongs to the KRTAP type 19 family. As to quaternary structure, interacts with hair keratins. In terms of tissue distribution, expressed in skin during two hair growth cycles. Expression restricted to the cortical cells of hair follicles, appearing first in the cortical cells processing the flat nuclei located a few cells above the dermal papilla.

Functionally, in the hair cortex, hair keratin intermediate filaments are embedded in an interfilamentous matrix, consisting of hair keratin-associated proteins (KRTAP), which are essential for the formation of a rigid and resistant hair shaft through their extensive disulfide bond cross-linking with abundant cysteine residues of hair keratins. The matrix proteins include the high-sulfur and high-glycine-tyrosine keratins. This chain is Keratin-associated protein 19-5 (Krtap19-5), found in Mus musculus (Mouse).